A 111-amino-acid chain; its full sequence is Large ribosomal subunit protein uL24 (111 aa).

It belongs to the universal ribosomal protein uL24 family. As to quaternary structure, part of the 50S ribosomal subunit.

One of two assembly initiator proteins, it binds directly to the 5'-end of the 23S rRNA, where it nucleates assembly of the 50S subunit. In terms of biological role, one of the proteins that surrounds the polypeptide exit tunnel on the outside of the subunit. This is Large ribosomal subunit protein uL24 from Chlamydia trachomatis serovar A (strain ATCC VR-571B / DSM 19440 / HAR-13).